The following is a 616-amino-acid chain: Chaperone protein HscA (616 aa).

The protein belongs to the heat shock protein 70 family.

Its function is as follows. Chaperone involved in the maturation of iron-sulfur cluster-containing proteins. Has a low intrinsic ATPase activity which is markedly stimulated by HscB. Involved in the maturation of IscU. The protein is Chaperone protein HscA of Salmonella typhimurium (strain LT2 / SGSC1412 / ATCC 700720).